The primary structure comprises 186 residues: Large ribosomal subunit protein uL22 (186 aa).

The disordered stretch occupies residues valine 161–glutamate 186. Residues arginine 177–glutamate 186 are compositionally biased toward basic and acidic residues.

Belongs to the universal ribosomal protein uL22 family.

In Drosophila pseudoobscura pseudoobscura (Fruit fly), this protein is Large ribosomal subunit protein uL22 (RpL17).